The sequence spans 334 residues: HTH-type transcriptional repressor PurR (334 aa).

Positions 2-56 (ATIKDVAKMAGVSTTTVSHVINKTRFVAAETEKLVLQAIQELNYSPSAVARSLKV) constitute an HTH lacI-type domain. Residues 4–23 (IKDVAKMAGVSTTTVSHVIN) constitute a DNA-binding region (H-T-H motif). A DNA-binding region spans residues 48-56 (SAVARSLKV). Hypoxanthine-binding residues include Tyr73, Lys189, Thr191, Phe220, and Asp274.

Homodimer.

Its pathway is purine metabolism; purine nucleotide biosynthesis [regulation]. Functionally, is the main repressor of the genes involved in the de novo synthesis of purine nucleotides, regulating purB, purC, purEK, purF, purHD, purL, purMN and guaBA expression. PurR is allosterically activated to bind its cognate DNA by binding the purine corepressors, hypoxanthine or guanine, thereby effecting transcription repression. The sequence is that of HTH-type transcriptional repressor PurR from Pasteurella multocida (strain Pm70).